The chain runs to 632 residues: Golgin subfamily A member 8J (632 aa).

Positions 1–76 are disordered; sequence MAEETQHNKL…TSSATLKDLE (76 aa). Coiled-coil stretches lie at residues 86–154 and 220–421; these read LDSR…HMKR and LKVQ…SLMA. 2 stretches are compositionally biased toward basic and acidic residues: residues 352-362 and 427-440; these read KQEERIQEQHK and HGGEHLDSEGEEAP. 3 disordered regions span residues 352 to 377, 423 to 452, and 496 to 524; these read KQEERIQEQHKSLQQLAKPQSVFKEP, PGEGHGGEHLDSEGEEAPRPMPSVPEDPES, and LSEPGGRAKDAALGGGHHQAGAQGGDEGE. Gly residues predominate over residues 508–520; it reads LGGGHHQAGAQGG.

The protein belongs to the GOLGA8 family.

The sequence is that of Golgin subfamily A member 8J (GOLGA8J) from Homo sapiens (Human).